Reading from the N-terminus, the 94-residue chain is Co-chaperonin GroES (94 aa).

The protein belongs to the GroES chaperonin family. In terms of assembly, heptamer of 7 subunits arranged in a ring. Interacts with the chaperonin GroEL.

The protein localises to the cytoplasm. Together with the chaperonin GroEL, plays an essential role in assisting protein folding. The GroEL-GroES system forms a nano-cage that allows encapsulation of the non-native substrate proteins and provides a physical environment optimized to promote and accelerate protein folding. GroES binds to the apical surface of the GroEL ring, thereby capping the opening of the GroEL channel. The polypeptide is Co-chaperonin GroES (Streptococcus pneumoniae (strain Hungary19A-6)).